Here is a 75-residue protein sequence, read N- to C-terminus: Sec-independent protein translocase protein TatA (75 aa).

The chain crosses the membrane as a helical span at residues 1–21; the sequence is MGSMSIWHWIVVLAVVLLLFG. Positions 43–75 are disordered; the sequence is MAEDDDAPAKPAEPPRAVPHQATPAPESEKKAV.

This sequence belongs to the TatA/E family. As to quaternary structure, the Tat system comprises two distinct complexes: a TatABC complex, containing multiple copies of TatA, TatB and TatC subunits, and a separate TatA complex, containing only TatA subunits. Substrates initially bind to the TatABC complex, which probably triggers association of the separate TatA complex to form the active translocon.

The protein resides in the cell inner membrane. Part of the twin-arginine translocation (Tat) system that transports large folded proteins containing a characteristic twin-arginine motif in their signal peptide across membranes. TatA could form the protein-conducting channel of the Tat system. In Azorhizobium caulinodans (strain ATCC 43989 / DSM 5975 / JCM 20966 / LMG 6465 / NBRC 14845 / NCIMB 13405 / ORS 571), this protein is Sec-independent protein translocase protein TatA.